Here is a 1394-residue protein sequence, read N- to C-terminus: DNA-directed RNA polymerase subunit beta' (1394 aa).

The Zn(2+) site is built by Cys-71, Cys-73, Cys-86, and Cys-89. Mg(2+) is bound by residues Asp-462, Asp-464, and Asp-466. The Zn(2+) site is built by Cys-811, Cys-885, Cys-892, and Cys-895.

This sequence belongs to the RNA polymerase beta' chain family. As to quaternary structure, the RNAP catalytic core consists of 2 alpha, 1 beta, 1 beta' and 1 omega subunit. When a sigma factor is associated with the core the holoenzyme is formed, which can initiate transcription. Requires Mg(2+) as cofactor. The cofactor is Zn(2+).

The enzyme catalyses RNA(n) + a ribonucleoside 5'-triphosphate = RNA(n+1) + diphosphate. DNA-dependent RNA polymerase catalyzes the transcription of DNA into RNA using the four ribonucleoside triphosphates as substrates. In Xanthobacter autotrophicus (strain ATCC BAA-1158 / Py2), this protein is DNA-directed RNA polymerase subunit beta'.